Reading from the N-terminus, the 239-residue chain is Ribosomal RNA small subunit methyltransferase G (239 aa).

S-adenosyl-L-methionine is bound by residues G78, F83, 129 to 130 (AE), and R148.

Belongs to the methyltransferase superfamily. RNA methyltransferase RsmG family.

The protein localises to the cytoplasm. Its function is as follows. Specifically methylates the N7 position of a guanine in 16S rRNA. This Clostridium botulinum (strain ATCC 19397 / Type A) protein is Ribosomal RNA small subunit methyltransferase G.